The primary structure comprises 491 residues: Pyruvate carboxylase subunit A (491 aa).

The 445-residue stretch at 1–445 (MFSKILVANR…HTHFVDEYRR (445 aa)) folds into the Biotin carboxylation domain. Residues lysine 116, glutamate 200, and histidine 235 each contribute to the ATP site. Residues 120–316 (KKLMKKAGVP…LVKEQIRVAS (197 aa)) form the ATP-grasp domain. Arginine 291 is a catalytic residue.

In terms of assembly, heterooctamer of four A and four B subunits. Mg(2+) is required as a cofactor. Mn(2+) serves as cofactor. The cofactor is Co(2+).

The catalysed reaction is hydrogencarbonate + pyruvate + ATP = oxaloacetate + ADP + phosphate + H(+). The protein operates within carbohydrate biosynthesis; gluconeogenesis. Its activity is regulated as follows. Inhibited by ADP and alpha-ketoglutarate. Pyruvate carboxylase catalyzes a 2-step reaction, involving the ATP-dependent carboxylation of the covalently attached biotin in the first step and the transfer of the carboxyl group to pyruvate in the second. This Methanothermobacter thermautotrophicus (strain ATCC 29096 / DSM 1053 / JCM 10044 / NBRC 100330 / Delta H) (Methanobacterium thermoautotrophicum) protein is Pyruvate carboxylase subunit A (pycA).